Here is a 299-residue protein sequence, read N- to C-terminus: Bifunctional protein FolD (299 aa).

NADP(+)-binding positions include 169–171 (GRS), serine 194, and isoleucine 235.

This sequence belongs to the tetrahydrofolate dehydrogenase/cyclohydrolase family. As to quaternary structure, homodimer.

The enzyme catalyses (6R)-5,10-methylene-5,6,7,8-tetrahydrofolate + NADP(+) = (6R)-5,10-methenyltetrahydrofolate + NADPH. It catalyses the reaction (6R)-5,10-methenyltetrahydrofolate + H2O = (6R)-10-formyltetrahydrofolate + H(+). It functions in the pathway one-carbon metabolism; tetrahydrofolate interconversion. In terms of biological role, catalyzes the oxidation of 5,10-methylenetetrahydrofolate to 5,10-methenyltetrahydrofolate and then the hydrolysis of 5,10-methenyltetrahydrofolate to 10-formyltetrahydrofolate. The protein is Bifunctional protein FolD of Trichormus variabilis (strain ATCC 29413 / PCC 7937) (Anabaena variabilis).